A 678-amino-acid polypeptide reads, in one-letter code: uncharacterized protein (678 aa).

Disordered stretches follow at residues 123–156 (TPLS…TDSV) and 381–417 (TETT…TEHS).

The protein localises to the cytoplasm. This is an uncharacterized protein from Schizosaccharomyces pombe (strain 972 / ATCC 24843) (Fission yeast).